A 550-amino-acid chain; its full sequence is MRSDSIKKGLERTPHRALLFATGIPKSEMNKPFIGVATSFTDIIPGHISMKELERFIEKGIHTGGGYPFFFGIPGICDGIAMGHKGMKYSLPSRELIADIIECIVEAHQFDGIVLLTNCDKITPGMLMAAARLDIPAIVLTAGPMLAGYYKGQRRNLTSDTFEAIGKFKKGVLTEKDLEALELCACPGAGSCQGMYTANTMACVTEALGMSLPGTAATPAVMSEKRRLAFETGVKIVELVRKKINARQILTKEAFYNAIAVDMALGGSTNTVLHIKAIANEAGINLPLEVFDEISRKTPHLVNIIPSGEHYMEDLYKAGGIPAVLKRLKDKIYSNPTVSGIDIKEIAQKAEIYDENVIRSIKKAYHKEGGVAILKGNLAPDGAVVKQTAVSSKMLKFEGIARCFDSEENAMKAILDGKIKEGDVIIIRYEGPSGGPGMREMLSPTSAITGMGLNESVALITDGRFSGGTRGPCIGHVSPEAARGGPIAIVKDGDKILIDIPKRKIEILISESEIKKRLKNWKPPKQKIEKGYLLRYARNVSSADKGAILE.

A Mg(2+)-binding site is contributed by Asp78. Cys119 serves as a coordination point for [2Fe-2S] cluster. Residues Asp120 and Lys121 each contribute to the Mg(2+) site. Lys121 is modified (N6-carboxylysine). Cys192 provides a ligand contact to [2Fe-2S] cluster. Mg(2+) is bound at residue Glu440. Ser466 functions as the Proton acceptor in the catalytic mechanism.

It belongs to the IlvD/Edd family. In terms of assembly, homodimer. It depends on [2Fe-2S] cluster as a cofactor. The cofactor is Mg(2+).

It catalyses the reaction (2R)-2,3-dihydroxy-3-methylbutanoate = 3-methyl-2-oxobutanoate + H2O. The catalysed reaction is (2R,3R)-2,3-dihydroxy-3-methylpentanoate = (S)-3-methyl-2-oxopentanoate + H2O. Its pathway is amino-acid biosynthesis; L-isoleucine biosynthesis; L-isoleucine from 2-oxobutanoate: step 3/4. The protein operates within amino-acid biosynthesis; L-valine biosynthesis; L-valine from pyruvate: step 3/4. Functionally, functions in the biosynthesis of branched-chain amino acids. Catalyzes the dehydration of (2R,3R)-2,3-dihydroxy-3-methylpentanoate (2,3-dihydroxy-3-methylvalerate) into 2-oxo-3-methylpentanoate (2-oxo-3-methylvalerate) and of (2R)-2,3-dihydroxy-3-methylbutanoate (2,3-dihydroxyisovalerate) into 2-oxo-3-methylbutanoate (2-oxoisovalerate), the penultimate precursor to L-isoleucine and L-valine, respectively. The sequence is that of Dihydroxy-acid dehydratase from Thermodesulfovibrio yellowstonii (strain ATCC 51303 / DSM 11347 / YP87).